The sequence spans 654 residues: NADH-ubiquinone oxidoreductase chain 5 (654 aa).

16 helical membrane-spanning segments follow: residues 1–21 (MYLA…FLGR), 30–50 (LITC…FYEV), 76–96 (FIYD…SALV), 113–133 (FFAY…GDNY), 135–155 (VMFI…NFWF), 178–198 (FSIG…TTVF), 200–220 (LAPF…LVAA), 241–261 (TPVS…YLLL), 274–294 (LILI…TGLL), 301–320 (VIAY…CGLS), 324–346 (VALF…AGSV), 365–385 (LLPF…ALPF), 406–426 (SGNL…MYSI), 451–471 (PLIM…FGYV), 510–530 (FLPL…YWIF), and 612–632 (TYAM…FFIG).

Belongs to the complex I subunit 5 family.

The protein resides in the mitochondrion inner membrane. The catalysed reaction is a ubiquinone + NADH + 5 H(+)(in) = a ubiquinol + NAD(+) + 4 H(+)(out). Core subunit of the mitochondrial membrane respiratory chain NADH dehydrogenase (Complex I) that is believed to belong to the minimal assembly required for catalysis. Complex I functions in the transfer of electrons from NADH to the respiratory chain. The immediate electron acceptor for the enzyme is believed to be ubiquinone. This Rhizopus stolonifer (Rhizopus nigricans) protein is NADH-ubiquinone oxidoreductase chain 5 (ND5).